A 312-amino-acid chain; its full sequence is DNA-directed RNA polymerase subunit alpha (312 aa).

The interval 1–226 (MIEFEKPKIT…DHLNLFVDLS (226 aa)) is alpha N-terminal domain (alpha-NTD). Residues 243–312 (TERVLDKIIE…ELGLSLKKRK (70 aa)) are alpha C-terminal domain (alpha-CTD).

It belongs to the RNA polymerase alpha chain family. In terms of assembly, homodimer. The RNAP catalytic core consists of 2 alpha, 1 beta, 1 beta' and 1 omega subunit. When a sigma factor is associated with the core the holoenzyme is formed, which can initiate transcription.

It carries out the reaction RNA(n) + a ribonucleoside 5'-triphosphate = RNA(n+1) + diphosphate. Functionally, DNA-dependent RNA polymerase catalyzes the transcription of DNA into RNA using the four ribonucleoside triphosphates as substrates. The polypeptide is DNA-directed RNA polymerase subunit alpha (Lactococcus lactis subsp. cremoris (strain SK11)).